The following is a 239-amino-acid chain: MSTLFVADIHLCAQEPAITAGFLHFLRTRAIAAQALYILGDLFEVWIGDDDPNPLHHEIAVALQALTQRGIPCYFIHGNRDFLLGKRYAAACGITLLPAQRVMQLDELRVVILHGDTLCTDDNDYQRFRRRVHQRWLQRLFLSLPLQLRLRIADRMRANSLRANAGKTADIMDINAQAVMAVMDDTGATVMIHGHTHRPAIHQLPGERRRAVLGAWHHQGSAIEVSTSGVMLHEFSFGG.

Residues aspartate 8, histidine 10, aspartate 41, asparagine 79, and histidine 114 each coordinate Mn(2+). A substrate-binding site is contributed by 79-80; that stretch reads NR. Substrate contacts are provided by aspartate 122, serine 160, asparagine 164, lysine 167, and histidine 195. Mn(2+) contacts are provided by histidine 195 and histidine 197.

The protein belongs to the LpxH family. Mn(2+) is required as a cofactor.

It localises to the cell inner membrane. It carries out the reaction UDP-2-N,3-O-bis[(3R)-3-hydroxytetradecanoyl]-alpha-D-glucosamine + H2O = 2-N,3-O-bis[(3R)-3-hydroxytetradecanoyl]-alpha-D-glucosaminyl 1-phosphate + UMP + 2 H(+). Its pathway is glycolipid biosynthesis; lipid IV(A) biosynthesis; lipid IV(A) from (3R)-3-hydroxytetradecanoyl-[acyl-carrier-protein] and UDP-N-acetyl-alpha-D-glucosamine: step 4/6. Hydrolyzes the pyrophosphate bond of UDP-2,3-diacylglucosamine to yield 2,3-diacylglucosamine 1-phosphate (lipid X) and UMP by catalyzing the attack of water at the alpha-P atom. Involved in the biosynthesis of lipid A, a phosphorylated glycolipid that anchors the lipopolysaccharide to the outer membrane of the cell. This chain is UDP-2,3-diacylglucosamine hydrolase, found in Sodalis glossinidius (strain morsitans).